Reading from the N-terminus, the 369-residue chain is Probable dual-specificity RNA methyltransferase RlmN (369 aa).

Residue E106 is the Proton acceptor of the active site. A Radical SAM core domain is found at 118–354 (EARRLTVCVS…VTVRRSRGQD (237 aa)). An intrachain disulfide couples C125 to C359. Residues C132, C136, and C139 each coordinate [4Fe-4S] cluster. S-adenosyl-L-methionine-binding positions include 183–184 (GE), S215, 238–240 (SLH), and N316. Catalysis depends on C359, which acts as the S-methylcysteine intermediate.

Belongs to the radical SAM superfamily. RlmN family. [4Fe-4S] cluster is required as a cofactor.

The protein localises to the cytoplasm. It carries out the reaction adenosine(2503) in 23S rRNA + 2 reduced [2Fe-2S]-[ferredoxin] + 2 S-adenosyl-L-methionine = 2-methyladenosine(2503) in 23S rRNA + 5'-deoxyadenosine + L-methionine + 2 oxidized [2Fe-2S]-[ferredoxin] + S-adenosyl-L-homocysteine. The enzyme catalyses adenosine(37) in tRNA + 2 reduced [2Fe-2S]-[ferredoxin] + 2 S-adenosyl-L-methionine = 2-methyladenosine(37) in tRNA + 5'-deoxyadenosine + L-methionine + 2 oxidized [2Fe-2S]-[ferredoxin] + S-adenosyl-L-homocysteine. Its function is as follows. Specifically methylates position 2 of adenine 2503 in 23S rRNA and position 2 of adenine 37 in tRNAs. The protein is Probable dual-specificity RNA methyltransferase RlmN of Salinibacter ruber (strain DSM 13855 / M31).